The sequence spans 509 residues: ATP synthase subunit alpha (509 aa).

169 to 176 (GDRQTGKT) contacts ATP.

This sequence belongs to the ATPase alpha/beta chains family. As to quaternary structure, F-type ATPases have 2 components, CF(1) - the catalytic core - and CF(0) - the membrane proton channel. CF(1) has five subunits: alpha(3), beta(3), gamma(1), delta(1), epsilon(1). CF(0) has three main subunits: a(1), b(2) and c(9-12). The alpha and beta chains form an alternating ring which encloses part of the gamma chain. CF(1) is attached to CF(0) by a central stalk formed by the gamma and epsilon chains, while a peripheral stalk is formed by the delta and b chains.

Its subcellular location is the cell inner membrane. The catalysed reaction is ATP + H2O + 4 H(+)(in) = ADP + phosphate + 5 H(+)(out). In terms of biological role, produces ATP from ADP in the presence of a proton gradient across the membrane. The alpha chain is a regulatory subunit. This Agrobacterium fabrum (strain C58 / ATCC 33970) (Agrobacterium tumefaciens (strain C58)) protein is ATP synthase subunit alpha.